A 188-amino-acid chain; its full sequence is Probable manganese efflux pump MntP (188 aa).

5 consecutive transmembrane segments (helical) span residues 3–23 (ITAT…ASVG), 66–86 (LEWN…RMII), 106–128 (WLLV…GLAF), 143–163 (ATLI…SIIG), and 168–188 (ILGG…HFHG).

Belongs to the MntP (TC 9.B.29) family.

It is found in the cell inner membrane. In terms of biological role, probably functions as a manganese efflux pump. The polypeptide is Probable manganese efflux pump MntP (Shigella sonnei (strain Ss046)).